Consider the following 394-residue polypeptide: Elongation factor Tu (394 aa).

A tr-type G domain is found at 10-204 (KPHINIGTIG…AVDDNIPTPE (195 aa)). Residues 19–26 (GHVDHGKT) form a G1 region. Residue 19-26 (GHVDHGKT) coordinates GTP. Thr-26 provides a ligand contact to Mg(2+). Residues 60–64 (GITIN) are G2. The interval 81 to 84 (DCPG) is G3. Residues 81–85 (DCPGH) and 136–139 (NKVD) each bind GTP. A G4 region spans residues 136–139 (NKVD). Residues 174–176 (SAL) form a G5 region.

This sequence belongs to the TRAFAC class translation factor GTPase superfamily. Classic translation factor GTPase family. EF-Tu/EF-1A subfamily. In terms of assembly, monomer.

Its subcellular location is the cytoplasm. The catalysed reaction is GTP + H2O = GDP + phosphate + H(+). Its function is as follows. GTP hydrolase that promotes the GTP-dependent binding of aminoacyl-tRNA to the A-site of ribosomes during protein biosynthesis. In Chlamydia pneumoniae (Chlamydophila pneumoniae), this protein is Elongation factor Tu.